The chain runs to 260 residues: Translation initiation factor 2 subunit alpha (260 aa).

An S1 motif domain is found at Gly-12 to Lys-83.

This sequence belongs to the eIF-2-alpha family. Heterotrimer composed of an alpha, a beta and a gamma chain.

EIF-2 functions in the early steps of protein synthesis by forming a ternary complex with GTP and initiator tRNA. This Methanosphaera stadtmanae (strain ATCC 43021 / DSM 3091 / JCM 11832 / MCB-3) protein is Translation initiation factor 2 subunit alpha.